A 369-amino-acid chain; its full sequence is Cyclin-I2 (369 aa).

The tract at residues 1 to 116 (MASGAQLPPQ…SRKPRNLEGD (116 aa)) is disordered. 2 stretches are compositionally biased toward low complexity: residues 64–76 (AASLHAASAAVPV) and 83–101 (APAGKTADAVPAAAPEQAP).

Belongs to the cyclin family.

This is Cyclin-I2 (CCNI2) from Homo sapiens (Human).